The following is a 57-amino-acid chain: uncharacterized protein (57 aa).

A disordered region spans residues 31–57 (HHQTSSFNPMPSEVSLHTSHNFPHTTF). Polar residues predominate over residues 33-57 (QTSSFNPMPSEVSLHTSHNFPHTTF).

This is an uncharacterized protein from Invertebrate iridescent virus 6 (IIV-6).